Consider the following 417-residue polypeptide: MREKVYLKFEEMPKVYYNVLADLPFELDPPLDPETNKPISPEKLLAIFPEPLLEQEVSKERFIPIPEPVLKEYAVYRPTPLVRATFLEEYLRTRTKIYYKYEGVSPTGSHKVNTAIAQAYYNKIAGTKTLVTETGAGQWGSALSYAGQKFGLDVRIFMVKVSYQQKPFRKILMNLFGGDVQPSPSNLTQIGRQFSEDHPGTLGIAISEAIHTVLNEKDAKYSLGSVLNHVLLHQTIIGLEMKKQLEIIGIKPDIIVACHGGGSNFGGSALPFIPDVLSGKNIKIVAVEPESCPSLTKGEYRYDFGDTAGLTPLMKMYTLGKDFVPPAIHAGGLRYHGASPIVSKLYHERLIDAASVTQEEVFEAGKLFAKLEGIVPAPESAHAIAYVIKEAKKGDKESIVFTLSGHGYFDLNAYINQ.

Position 111 is an N6-(pyridoxal phosphate)lysine (K111).

Belongs to the TrpB family. In terms of assembly, tetramer of two alpha and two beta chains. Pyridoxal 5'-phosphate serves as cofactor.

It catalyses the reaction (1S,2R)-1-C-(indol-3-yl)glycerol 3-phosphate + L-serine = D-glyceraldehyde 3-phosphate + L-tryptophan + H2O. It participates in amino-acid biosynthesis; L-tryptophan biosynthesis; L-tryptophan from chorismate: step 5/5. Its function is as follows. The beta subunit is responsible for the synthesis of L-tryptophan from indole and L-serine. The chain is Tryptophan synthase beta chain from Fervidobacterium nodosum (strain ATCC 35602 / DSM 5306 / Rt17-B1).